Reading from the N-terminus, the 205-residue chain is Recombination protein RecR (205 aa).

The segment at 60-75 (CKVCHNISDTETCQIC) adopts a C4-type zinc-finger fold. A Toprim domain is found at 83–178 (SMVCVVENIR…KLSVLARGVS (96 aa)).

It belongs to the RecR family.

In terms of biological role, may play a role in DNA repair. It seems to be involved in an RecBC-independent recombinational process of DNA repair. It may act with RecF and RecO. The chain is Recombination protein RecR from Bacteroides fragilis (strain ATCC 25285 / DSM 2151 / CCUG 4856 / JCM 11019 / LMG 10263 / NCTC 9343 / Onslow / VPI 2553 / EN-2).